Consider the following 681-residue polypeptide: Sorting nexin-41 (681 aa).

Acidic residues predominate over residues 1-12 (MSTDNLFEDIEQ). Residues 1-94 (MSTDNLFEDI…HNTSLNNGYP (94 aa)) are disordered. Over residues 13–24 (DNNPSFYGNPSI) the composition is skewed to polar residues. Residues 113-236 (NDSQLQVDII…KFFDPNYELC (124 aa)) form the PX domain. R151, S153, K177, and R200 together coordinate a 1,2-diacyl-sn-glycero-3-phospho-(1D-myo-inositol-3-phosphate). 2 disordered regions span residues 475–505 (LASR…TENF) and 558–597 (TATG…QTSI). 2 stretches are compositionally biased toward low complexity: residues 482–497 (DNDS…NNND) and 558–589 (TATG…QSQS).

It belongs to the sorting nexin family.

Its subcellular location is the endosome membrane. It localises to the endomembrane system. Its function is as follows. May be required for cytoplasm to vacuole transport (Cvt) and pexophagy. The chain is Sorting nexin-41 (SNX41) from Candida albicans (strain SC5314 / ATCC MYA-2876) (Yeast).